Consider the following 387-residue polypeptide: Succinyl-diaminopimelate desuccinylase (387 aa).

Zn(2+) is bound at residue His-75. Asp-77 is an active-site residue. A Zn(2+)-binding site is contributed by Asp-108. The active-site Proton acceptor is the Glu-139. Zn(2+)-binding residues include Glu-140, Glu-168, and His-357.

Belongs to the peptidase M20A family. DapE subfamily. Homodimer. The cofactor is Zn(2+). Co(2+) serves as cofactor.

The enzyme catalyses N-succinyl-(2S,6S)-2,6-diaminopimelate + H2O = (2S,6S)-2,6-diaminopimelate + succinate. The protein operates within amino-acid biosynthesis; L-lysine biosynthesis via DAP pathway; LL-2,6-diaminopimelate from (S)-tetrahydrodipicolinate (succinylase route): step 3/3. Catalyzes the hydrolysis of N-succinyl-L,L-diaminopimelic acid (SDAP), forming succinate and LL-2,6-diaminopimelate (DAP), an intermediate involved in the bacterial biosynthesis of lysine and meso-diaminopimelic acid, an essential component of bacterial cell walls. This is Succinyl-diaminopimelate desuccinylase from Caulobacter sp. (strain K31).